The sequence spans 91 residues: uncharacterized protein (91 aa).

Helical transmembrane passes span Val9–Pro29, Leu44–Trp64, and Gln71–Leu91.

Its subcellular location is the cell membrane. This is an uncharacterized protein from Bacillus subtilis (strain 168).